We begin with the raw amino-acid sequence, 492 residues long: MSTANKHPEAASLNAFKQPRSFYLIFSIELWERFGYYGLQGIMAVYLVKMLGMSEAQSITLFASFSALVYGLIAVGGWLGDKVLGTKRVIVLGTLVLALGYALVAWSGHDIAMIYFGMATIAVGNGLFKANPSSLLSTCYEKDDPRLDGAFTMYYMAINIGSFFSMLATPWLAAQFGWSTAFGLSFVGMLITLVNFMFFRKWVKDHGSKPDFAPLNMGKLLVTLLGIAVMIAAATWLLHNQDIARMVLGAVAVAIVVIFTKEALTLKGAARRKMIVAFLLMLEAIVFFVLYMQMPTSLNFFAIRNVEHSLLGIAFQPEQFQALNPFWIMIFSPLLAALYNKLGDRMPMPHKFALGMVLCSAAFLVLPLGASLANKMGIVSVGWLVLSYALQSVGELMISGLGLAMVAQLVPQRLMGFIMGSWFLTTAGAAMVAGKVANLMAVPENITNPLLSLHVYGDIFFKIGITTGVIAVLMILAAPLLNRMTQDEQPGV.

Residues 1–20 are Cytoplasmic-facing; it reads MSTANKHPEAASLNAFKQPR. Residues 21–43 traverse the membrane as a helical segment; sequence SFYLIFSIELWERFGYYGLQGIM. Topologically, residues 44–58 are periplasmic; it reads AVYLVKMLGMSEAQS. The chain crosses the membrane as a helical span at residues 59–79; that stretch reads ITLFASFSALVYGLIAVGGWL. The Cytoplasmic portion of the chain corresponds to 80 to 88; it reads GDKVLGTKR. The helical transmembrane segment at 89–109 threads the bilayer; that stretch reads VIVLGTLVLALGYALVAWSGH. Aspartate 110 is a topological domain (periplasmic). The chain crosses the membrane as a helical span at residues 111-131; that stretch reads IAMIYFGMATIAVGNGLFKAN. Residues 132-152 lie on the Cytoplasmic side of the membrane; that stretch reads PSSLLSTCYEKDDPRLDGAFT. A helical transmembrane segment spans residues 153 to 173; that stretch reads MYYMAINIGSFFSMLATPWLA. Residues 174–178 lie on the Periplasmic side of the membrane; the sequence is AQFGW. Residues 179–199 form a helical membrane-spanning segment; it reads STAFGLSFVGMLITLVNFMFF. Residues 200-217 lie on the Cytoplasmic side of the membrane; the sequence is RKWVKDHGSKPDFAPLNM. Residues 218–238 traverse the membrane as a helical segment; the sequence is GKLLVTLLGIAVMIAAATWLL. Residues 239 to 245 lie on the Periplasmic side of the membrane; that stretch reads HNQDIAR. Residues 246–266 form a helical membrane-spanning segment; the sequence is MVLGAVAVAIVVIFTKEALTL. Over 267-273 the chain is Cytoplasmic; it reads KGAARRK. Residues 274-294 traverse the membrane as a helical segment; that stretch reads MIVAFLLMLEAIVFFVLYMQM. The Periplasmic portion of the chain corresponds to 295–319; the sequence is PTSLNFFAIRNVEHSLLGIAFQPEQ. Residues 320–340 traverse the membrane as a helical segment; that stretch reads FQALNPFWIMIFSPLLAALYN. Topologically, residues 341-351 are cytoplasmic; it reads KLGDRMPMPHK. The helical transmembrane segment at 352-372 threads the bilayer; that stretch reads FALGMVLCSAAFLVLPLGASL. Over 373–377 the chain is Periplasmic; the sequence is ANKMG. The helical transmembrane segment at 378–398 threads the bilayer; sequence IVSVGWLVLSYALQSVGELMI. Over 399 to 413 the chain is Cytoplasmic; it reads SGLGLAMVAQLVPQR. A helical membrane pass occupies residues 414 to 434; that stretch reads LMGFIMGSWFLTTAGAAMVAG. The Periplasmic portion of the chain corresponds to 435 to 458; that stretch reads KVANLMAVPENITNPLLSLHVYGD. Residues 459-479 traverse the membrane as a helical segment; it reads IFFKIGITTGVIAVLMILAAP. Residues 480-492 lie on the Cytoplasmic side of the membrane; that stretch reads LLNRMTQDEQPGV.

The protein belongs to the major facilitator superfamily. Proton-dependent oligopeptide transporter (POT/PTR) (TC 2.A.17) family. DtpA subfamily.

The protein resides in the cell inner membrane. Functionally, proton-dependent permease that transports di- and tripeptides. This is Dipeptide and tripeptide permease A from Erwinia pyrifoliae (strain DSM 12163 / CIP 106111 / Ep16/96).